Reading from the N-terminus, the 106-residue chain is Small ribosomal subunit protein mS33 (106 aa).

Ser-2 carries the post-translational modification N-acetylserine. The disordered stretch occupies residues 81–106 (EQRRLKKLRGKGKPRKGEGKRATKKK). Basic residues predominate over residues 84-94 (RLKKLRGKGKP). The segment covering 95-106 (RKGEGKRATKKK) has biased composition (basic and acidic residues).

It belongs to the mitochondrion-specific ribosomal protein mS33 family. Component of the mitochondrial ribosome small subunit (28S) which comprises a 12S rRNA and about 30 distinct proteins.

It localises to the mitochondrion. This chain is Small ribosomal subunit protein mS33 (Mrps33), found in Mus musculus (Mouse).